Here is a 185-residue protein sequence, read N- to C-terminus: Ribosome-recycling factor (185 aa).

It belongs to the RRF family.

The protein localises to the cytoplasm. In terms of biological role, responsible for the release of ribosomes from messenger RNA at the termination of protein biosynthesis. May increase the efficiency of translation by recycling ribosomes from one round of translation to another. The sequence is that of Ribosome-recycling factor from Proteus mirabilis (strain HI4320).